Consider the following 27-residue polypeptide: Peptide Cn29 (27 aa).

3 disulfide bridges follow: Cys2/Cys23, Cys5/Cys18, and Cys12/Cys25.

In terms of tissue distribution, expressed by the venom gland.

It is found in the secreted. The protein is Peptide Cn29 of Centruroides noxius (Mexican scorpion).